The sequence spans 726 residues: Biotin--protein ligase (726 aa).

Positions 28–98 (EVKDQVSNKQ…SDRGGGPVEH (71 aa)) are disordered. A compositionally biased stretch (basic and acidic residues) spans 43–75 (PKPEPSLEIKPEQDGMEHVGRDDPKALGEEPKQ). 2 positions are modified to phosphoserine: serine 147 and serine 299. Residues 463-652 (KQLGKVILFA…VLEKLIKEFQ (190 aa)) form the BPL/LPL catalytic domain.

This sequence belongs to the biotin--protein ligase family. Monomer. As to expression, widely expressed. Mostly expressed in muscle, placenta and to a lower extent in the brain, kidney, pancreas, liver and lung.

The protein localises to the cytoplasm. It is found in the mitochondrion. The enzyme catalyses apo-[methylmalonyl-CoA:pyruvate carboxytransferase] + biotin + ATP = holo-[methylmalonyl-CoA:pyruvate carboxytransferase] + AMP + diphosphate + H(+). It carries out the reaction apo-[propionyl-CoA:carbon-dioxide ligase (ADP-forming)] + biotin + ATP = holo-[propionyl-CoA:carbon-dioxide ligase (ADP-forming)] + AMP + diphosphate + H(+). It catalyses the reaction apo-[3-methylcrotonoyl-CoA:carbon-dioxide ligase (ADP-forming)] + biotin + ATP = holo-[3-methylcrotonoyl-CoA:carbon-dioxide ligase (ADP-forming)] + AMP + diphosphate + H(+). The catalysed reaction is biotin + L-lysyl-[protein] + ATP = N(6)-biotinyl-L-lysyl-[protein] + AMP + diphosphate + H(+). Its function is as follows. Biotin--protein ligase catalyzing the biotinylation of the 4 biotin-dependent carboxylases acetyl-CoA-carboxylase, pyruvate carboxylase, propionyl-CoA carboxylase, and methylcrotonyl-CoA carboxylase. The chain is Biotin--protein ligase from Homo sapiens (Human).